The sequence spans 321 residues: Sporulation protein cse15 (321 aa).

Coiled coils occupy residues 37–70 (FHQK…TKEK) and 108–205 (IEEK…KEKL). Composition is skewed to basic and acidic residues over residues 234-243 (GTKQKEKTEE) and 282-293 (AKSHTIEELKNR). Disordered stretches follow at residues 234 to 253 (GTKQ…AQPN) and 274 to 293 (AHAQ…LKNR).

This is Sporulation protein cse15 (cse15) from Bacillus subtilis (strain 168).